The primary structure comprises 435 residues: Glutamyl-tRNA reductase (435 aa).

Substrate-binding positions include 49–52, serine 114, 119–121, and glutamine 125; these read TCNR and EPQ. Residue cysteine 50 is the Nucleophile of the active site. 204–209 lines the NADP(+) pocket; sequence GAGETI.

This sequence belongs to the glutamyl-tRNA reductase family. In terms of assembly, homodimer.

It carries out the reaction (S)-4-amino-5-oxopentanoate + tRNA(Glu) + NADP(+) = L-glutamyl-tRNA(Glu) + NADPH + H(+). It participates in porphyrin-containing compound metabolism; protoporphyrin-IX biosynthesis; 5-aminolevulinate from L-glutamyl-tRNA(Glu): step 1/2. Its function is as follows. Catalyzes the NADPH-dependent reduction of glutamyl-tRNA(Glu) to glutamate 1-semialdehyde (GSA). The chain is Glutamyl-tRNA reductase from Actinobacillus succinogenes (strain ATCC 55618 / DSM 22257 / CCUG 43843 / 130Z).